Consider the following 104-residue polypeptide: L-rhamnose mutarotase (104 aa).

A substrate-binding site is contributed by Y18. H22 functions as the Proton donor in the catalytic mechanism. Residues Y41 and 76–77 (WW) contribute to the substrate site.

This sequence belongs to the rhamnose mutarotase family. As to quaternary structure, homodimer.

It localises to the cytoplasm. The catalysed reaction is alpha-L-rhamnose = beta-L-rhamnose. The protein operates within carbohydrate metabolism; L-rhamnose metabolism. In terms of biological role, involved in the anomeric conversion of L-rhamnose. The sequence is that of L-rhamnose mutarotase from Klebsiella pneumoniae (strain 342).